The following is a 351-amino-acid chain: Glycerol-1-phosphate dehydrogenase [NAD(P)+] (351 aa).

Residues 98 to 102 (GSIID) and 120 to 123 (TTAS) contribute to the NAD(+) site. Asp125 contacts substrate. Ser129 is an NAD(+) binding site. Asp172 contacts substrate. Residues Asp172 and His252 each contribute to the Zn(2+) site. His256 contacts substrate. Position 268 (His268) interacts with Zn(2+).

This sequence belongs to the glycerol-1-phosphate dehydrogenase family. It depends on Zn(2+) as a cofactor.

It is found in the cytoplasm. The enzyme catalyses sn-glycerol 1-phosphate + NAD(+) = dihydroxyacetone phosphate + NADH + H(+). It carries out the reaction sn-glycerol 1-phosphate + NADP(+) = dihydroxyacetone phosphate + NADPH + H(+). It functions in the pathway membrane lipid metabolism; glycerophospholipid metabolism. Functionally, catalyzes the NAD(P)H-dependent reduction of dihydroxyacetonephosphate (DHAP or glycerone phosphate) to glycerol 1-phosphate (G1P). The G1P thus generated is used as the glycerophosphate backbone of phospholipids in the cellular membranes of Archaea. This Thermococcus kodakarensis (strain ATCC BAA-918 / JCM 12380 / KOD1) (Pyrococcus kodakaraensis (strain KOD1)) protein is Glycerol-1-phosphate dehydrogenase [NAD(P)+].